Reading from the N-terminus, the 243-residue chain is DNA repair protein RecO (243 aa).

Belongs to the RecO family.

In terms of biological role, involved in DNA repair and RecF pathway recombination. In Frankia casuarinae (strain DSM 45818 / CECT 9043 / HFP020203 / CcI3), this protein is DNA repair protein RecO.